A 217-amino-acid chain; its full sequence is Zinc finger CCHC-type and RNA-binding motif-containing protein 1 (217 aa).

Positions 10-88 (STVYVSNLPF…RVIKASIAID (79 aa)) constitute an RRM domain. Residues 105 to 122 (SKCYECGESGHLSYACPK) form a CCHC-type zinc finger. The segment at 120 to 217 (CPKNMLGERE…YFSDEEELSD (98 aa)) is disordered. The segment covering 145–163 (PEEEIEEVEESEDEGEDPA) has biased composition (acidic residues). A phosphoserine mark is found at serine 155, serine 210, and serine 216.

As to quaternary structure, component of the U11/U12 snRNPs that are part of the U12-type spliceosome. Interacts with ZRSR1.

Its subcellular location is the nucleus. It localises to the nucleoplasm. This chain is Zinc finger CCHC-type and RNA-binding motif-containing protein 1 (ZCRB1), found in Bos taurus (Bovine).